We begin with the raw amino-acid sequence, 251 residues long: Octanoyltransferase (251 aa).

The region spanning 56–237 (ADTGDEIWVV…RLIANLDGES (182 aa)) is the BPL/LPL catalytic domain. Substrate contacts are provided by residues 96-103 (RGGQITYH), 168-170 (ALG), and 181-183 (GLS). The active-site Acyl-thioester intermediate is C199.

This sequence belongs to the LipB family.

Its subcellular location is the cytoplasm. It carries out the reaction octanoyl-[ACP] + L-lysyl-[protein] = N(6)-octanoyl-L-lysyl-[protein] + holo-[ACP] + H(+). It functions in the pathway protein modification; protein lipoylation via endogenous pathway; protein N(6)-(lipoyl)lysine from octanoyl-[acyl-carrier-protein]: step 1/2. Functionally, catalyzes the transfer of endogenously produced octanoic acid from octanoyl-acyl-carrier-protein onto the lipoyl domains of lipoate-dependent enzymes. Lipoyl-ACP can also act as a substrate although octanoyl-ACP is likely to be the physiological substrate. The protein is Octanoyltransferase of Burkholderia ambifaria (strain ATCC BAA-244 / DSM 16087 / CCUG 44356 / LMG 19182 / AMMD) (Burkholderia cepacia (strain AMMD)).